The sequence spans 313 residues: MRFSTTLATAATALFFTASQVSAIGELAFNLGVKNNDGTCKSTSDYETELQALKSYTSTVKVYAASDCNTLQNLGPAAEAEGFTIFVGVWPTDDSHYAAEKAALQTYLPKIKESTVAGFLVGSEALYRNDLTASQLSDKINDVRSVVADISDSDGKSYSGKQVGTVDSWNVLVAGYNSAVIEASDFVMANAFSYWQGQTMQNASYSFFDDIMQALQVIQSTKGSTDITFWVGETGWPTDGTNFESSYPSVDNAKQFWKEGICSMRAWGVNVIVFEAFDEDWKPNTSGTSDVEKHWGVFTSSDNLKYSLDCDFS.

Positions Met1 to Ala23 are cleaved as a signal peptide. Glu124 serves as the catalytic Proton donor. The N-linked (GlcNAc...) asparagine glycan is linked to Asn202. Catalysis depends on Glu233, which acts as the Nucleophile. N-linked (GlcNAc...) asparagine glycosylation is present at Asn284.

It belongs to the glycosyl hydrolase 17 family.

The protein localises to the secreted. Its subcellular location is the cell wall. The catalysed reaction is Successive hydrolysis of beta-D-glucose units from the non-reducing ends of (1-&gt;3)-beta-D-glucans, releasing alpha-glucose.. In terms of biological role, glucanases possibly play a role in cell expansion during growth, in cell-cell fusion during mating, and in spore release during sporulation. This enzyme may be involved in beta-glucan degradation and also function biosynthetically as a transglycosylase. This chain is Glucan 1,3-beta-glucosidase (BGL2), found in Saccharomyces cerevisiae (strain ATCC 204508 / S288c) (Baker's yeast).